A 620-amino-acid polypeptide reads, in one-letter code: Glutathione-regulated potassium-efflux system protein KefC (620 aa).

Helical transmembrane passes span 4 to 24, 26 to 46, 54 to 74, 90 to 110, 114 to 134, 149 to 169, 178 to 198, 218 to 238, 270 to 290, 294 to 314, 327 to 347, and 359 to 379; these read HTLL…PIAV, LGLG…PWGL, SILH…GLEL, GALQ…FLGL, VAEL…MQAM, FAVL…IPLL, LGAF…VVLL, VFSA…EEVG, GLLL…GTLV, LRIL…LWLV, WFAV…GAAQ, and ALTL…MLLT. Residues 399–518 form the RCK N-terminal domain; it reads QPRVIVAGFG…AGVAMPERET (120 aa). The interval 599-620 is disordered; that stretch reads QGTAEGKHSGEAADEPEVKPSI.

Belongs to the monovalent cation:proton antiporter 2 (CPA2) transporter (TC 2.A.37) family. KefC subfamily. Homodimer. Interacts with the regulatory subunit KefF.

It localises to the cell inner membrane. In terms of biological role, pore-forming subunit of a potassium efflux system that confers protection against electrophiles. Catalyzes K(+)/H(+) antiport. The chain is Glutathione-regulated potassium-efflux system protein KefC from Salmonella heidelberg (strain SL476).